The chain runs to 95 residues: Membrane protein insertion and folding monitor (95 aa).

Residues 12 to 32 (LFLVDFFTIILPALTAIGIAF) form a helical membrane-spanning segment. The interval 86–89 (DEED) is crucial for elongation arrest.

The protein localises to the cell membrane. Its function is as follows. Sensor protein that up-regulates translation of the secondary membrane protein insertase (MisCB/YqjG) when activity of the primary membrane protein insertase (MisCA/SpoIIIJ) is limited. Acts as a ribosome-nascent chain complex. When the primary membrane protein insertase activity or level is reduced, the membrane insertion of MifM is impaired, which induces arrest of MifM translation and unfolding of the mRNA hairpin. Unfolding leads to translation of the downstream gene, which encodes the secondary membrane protein insertase MisCB/YqjG. Translation arrest of MifM is mediated by interaction of its C-terminal domain with the ribosomal polypeptide exit tunnel. Undergoes multisite stalling, which may allow a sufficient duration of ribosomal stalling and consequently sufficient levels of MisCB/YqjG. In Bacillus subtilis (strain 168), this protein is Membrane protein insertion and folding monitor (mifM).